The following is a 108-amino-acid chain: Thiosulfate sulfurtransferase GlpE (108 aa).

One can recognise a Rhodanese domain in the interval 17–105 (HQGAAVLVDI…WHRRFPADVA (89 aa)). Cysteine 65 acts as the Cysteine persulfide intermediate in catalysis.

Belongs to the GlpE family.

Its subcellular location is the cytoplasm. It carries out the reaction thiosulfate + hydrogen cyanide = thiocyanate + sulfite + 2 H(+). It catalyses the reaction thiosulfate + [thioredoxin]-dithiol = [thioredoxin]-disulfide + hydrogen sulfide + sulfite + 2 H(+). Its function is as follows. Transferase that catalyzes the transfer of sulfur from thiosulfate to thiophilic acceptors such as cyanide or dithiols. May function in a CysM-independent thiosulfate assimilation pathway by catalyzing the conversion of thiosulfate to sulfite, which can then be used for L-cysteine biosynthesis. This Salmonella choleraesuis (strain SC-B67) protein is Thiosulfate sulfurtransferase GlpE.